The sequence spans 178 residues: Large ribosomal subunit protein bL25 (178 aa).

It belongs to the bacterial ribosomal protein bL25 family. CTC subfamily. In terms of assembly, part of the 50S ribosomal subunit; part of the 5S rRNA/L5/L18/L25 subcomplex. Contacts the 5S rRNA. Binds to the 5S rRNA independently of L5 and L18.

Functionally, this is one of the proteins that binds to the 5S RNA in the ribosome where it forms part of the central protuberance. This is Large ribosomal subunit protein bL25 from Helicobacter pylori (strain Shi470).